Here is a 583-residue protein sequence, read N- to C-terminus: Threonine--tRNA ligase (583 aa).

Residues 185–478 (DHRKLGRELN…LVEHYGGAFP (294 aa)) form a catalytic region. Zn(2+)-binding residues include C278, H329, and H455.

It belongs to the class-II aminoacyl-tRNA synthetase family. Homodimer. Requires Zn(2+) as cofactor.

The protein resides in the cytoplasm. The enzyme catalyses tRNA(Thr) + L-threonine + ATP = L-threonyl-tRNA(Thr) + AMP + diphosphate + H(+). In terms of biological role, catalyzes the attachment of threonine to tRNA(Thr) in a two-step reaction: L-threonine is first activated by ATP to form Thr-AMP and then transferred to the acceptor end of tRNA(Thr). Also edits incorrectly charged L-seryl-tRNA(Thr). The protein is Threonine--tRNA ligase of Borrelia recurrentis (strain A1).